We begin with the raw amino-acid sequence, 356 residues long: Phosphate acyltransferase (356 aa).

Belongs to the PlsX family. As to quaternary structure, homodimer. Probably interacts with PlsY.

It localises to the cytoplasm. It carries out the reaction a fatty acyl-[ACP] + phosphate = an acyl phosphate + holo-[ACP]. Its pathway is lipid metabolism; phospholipid metabolism. In terms of biological role, catalyzes the reversible formation of acyl-phosphate (acyl-PO(4)) from acyl-[acyl-carrier-protein] (acyl-ACP). This enzyme utilizes acyl-ACP as fatty acyl donor, but not acyl-CoA. In Escherichia coli (strain 55989 / EAEC), this protein is Phosphate acyltransferase.